Reading from the N-terminus, the 308-residue chain is Aspartate carbamoyltransferase catalytic subunit (308 aa).

2 residues coordinate carbamoyl phosphate: R55 and T56. K84 is an L-aspartate binding site. 3 residues coordinate carbamoyl phosphate: R105, H133, and Q136. 2 residues coordinate L-aspartate: R167 and R228. 2 residues coordinate carbamoyl phosphate: L267 and P268.

This sequence belongs to the aspartate/ornithine carbamoyltransferase superfamily. ATCase family. Heterooligomer of catalytic and regulatory chains.

The catalysed reaction is carbamoyl phosphate + L-aspartate = N-carbamoyl-L-aspartate + phosphate + H(+). The protein operates within pyrimidine metabolism; UMP biosynthesis via de novo pathway; (S)-dihydroorotate from bicarbonate: step 2/3. Catalyzes the condensation of carbamoyl phosphate and aspartate to form carbamoyl aspartate and inorganic phosphate, the committed step in the de novo pyrimidine nucleotide biosynthesis pathway. In Methanocella arvoryzae (strain DSM 22066 / NBRC 105507 / MRE50), this protein is Aspartate carbamoyltransferase catalytic subunit.